The following is a 427-amino-acid chain: Proteinase-activated receptor 1 (427 aa).

Positions 1 to 21 (MGPRWLLLWAAGLGLCSPLVS) are cleaved as a signal peptide. Residues 22-41 (ARTRGPRPGTDPTNGTLGPR) constitute a propeptide, removed for receptor activation. The interval 23-87 (RTRGPRPGTD…RSSPPQKSPP (65 aa)) is disordered. Asn35 carries N-linked (GlcNAc...) asparagine glycosylation. The Extracellular portion of the chain corresponds to 42–104 (SFFLRNSNDG…SGYLTSAWLT (63 aa)). The segment covering 58-68 (PEDEDSSEGEF) has biased composition (acidic residues). The N-linked (GlcNAc...) asparagine glycan is linked to Asn77. A helical membrane pass occupies residues 105 to 130 (VFIPSVYTGVFLVSLPLNIMAVVVFV). Residues 131–139 (LKMKVKKPA) lie on the Cytoplasmic side of the membrane. Residues 140 to 159 (VVYMLHLAAADVLFVCVLPF) traverse the membrane as a helical segment. Topologically, residues 160–178 (KISYYFSGSDWRFGSAMCR) are extracellular. A disulfide bridge connects residues Cys177 and Cys256. Residues 179 to 200 (FVTAAFYGNMYASIMLMTAISV) traverse the membrane as a helical segment. Topologically, residues 201-220 (DRFLAVVYPIQSLSWRTLGR) are cytoplasmic. Residues 221–241 (ASFICLAIWAMAIAGVAPLLL) traverse the membrane as a helical segment. At 242 to 270 (QEQATQVPGLNITACHDVLNQTLLEGYYS) the chain is on the extracellular side. N-linked (GlcNAc...) asparagine glycosylation is found at Asn252 and Asn261. The chain crosses the membrane as a helical span at residues 271–290 (YYFSAFSAVFFFVPLTLSTV). The Cytoplasmic segment spans residues 291–313 (SYVSIIRCLSSSTVANQNKKSRA). A helical transmembrane segment spans residues 314–336 (LLLSAAVFCIFILCFGPTNILLL). Over 337–351 (LHYAFLSSDPMTEAA) the chain is Extracellular. The helical transmembrane segment at 352–376 (YFAYLLCVCVSSISCCIDPLIYYYA) threads the bilayer. The Cytoplasmic segment spans residues 377-427 (SSECQRHLFAILHCKESSDPGSCNSSGQLMPSKMDTCSSNLSSSLYKKLLT). Ser420 is modified (phosphoserine).

It belongs to the G-protein coupled receptor 1 family. Post-translationally, proteolytic cleavage by thrombin generates a new N-terminus that functions as a tethered ligand. Also proteolytically cleaved by cathepsin CTSG. In terms of processing, phosphorylated in the C-terminal tail; probably mediating desensitization prior to the uncoupling and internalization of the receptor.

It localises to the cell membrane. Functionally, high affinity receptor that binds the activated thrombin, leading to calcium release from intracellular stores. The thrombin-activated receptor signaling pathway is mediated through PTX-insensitive G proteins, activation of phospholipase C resulting in the production of 1D-myo-inositol 1,4,5-trisphosphate (InsP3) which binds to InsP3 receptors causing calcium release from the stores. In astrocytes, the calcium released into the cytosol allows the Ca(2+)-dependent release of L-glutamate into the synaptic cleft through BEST1, that targets the neuronal postsynaptic GRIN2A/NMDAR receptor resulting in the synaptic plasticity regulation. May play a role in platelets activation and in vascular development. Mediates up-regulation of pro-inflammatory cytokines, such as MCP-1/CCL2 and IL6, triggered by coagulation factor Xa (F10) in cardiac fibroblasts and umbilical vein endothelial cells. The sequence is that of Proteinase-activated receptor 1 from Bos taurus (Bovine).